A 394-amino-acid chain; its full sequence is Cell division protein FtsZ (394 aa).

Residues 21–25, 108–110, glutamate 139, arginine 143, and aspartate 187 contribute to the GTP site; these read GGGGN and GTG.

Belongs to the FtsZ family. As to quaternary structure, homodimer. Polymerizes to form a dynamic ring structure in a strictly GTP-dependent manner. Interacts directly with several other division proteins.

It localises to the cytoplasm. In terms of biological role, essential cell division protein that forms a contractile ring structure (Z ring) at the future cell division site. The regulation of the ring assembly controls the timing and the location of cell division. One of the functions of the FtsZ ring is to recruit other cell division proteins to the septum to produce a new cell wall between the dividing cells. Binds GTP and shows GTPase activity. The sequence is that of Cell division protein FtsZ from Azotobacter vinelandii.